A 108-amino-acid polypeptide reads, in one-letter code: Small ribosomal subunit protein bS16 (108 aa).

It belongs to the bacterial ribosomal protein bS16 family.

This chain is Small ribosomal subunit protein bS16, found in Orientia tsutsugamushi (strain Boryong) (Rickettsia tsutsugamushi).